The chain runs to 527 residues: Sulfate adenylyltransferase (527 aa).

Residues 1 to 176 (MPIPTPHGGK…LQGINYPKHY (176 aa)) are N-terminal. The interval 177 to 406 (DYVDARKTPT…LRETNPPRSK (230 aa)) is catalytic. Position 206 (Gln-206) interacts with sulfate. ATP contacts are provided by residues 206 to 209 (QTRN) and 302 to 305 (GRDH). Residues Thr-207, Arg-208, and Asn-209 contribute to the active site. Arg-208 is a sulfate binding site. Ala-306 serves as a coordination point for sulfate. ATP is bound at residue Val-344. Residues 407–527 (QGFAILIDNS…VNYLKDQGFY (121 aa)) are required for oligomerization; adenylyl-sulfate kinase-like.

It belongs to the sulfate adenylyltransferase family. Homohexamer. Dimer of trimers.

The protein resides in the cytoplasm. The enzyme catalyses sulfate + ATP + H(+) = adenosine 5'-phosphosulfate + diphosphate. Its pathway is sulfur metabolism; hydrogen sulfide biosynthesis; sulfite from sulfate: step 1/3. Functionally, catalyzes the first intracellular reaction of sulfate assimilation, forming adenosine-5'-phosphosulfate (APS) from inorganic sulfate and ATP. Plays an important role in sulfate activation as a component of the biosynthesis pathway of sulfur-containing amino acids. In Candida albicans (strain SC5314 / ATCC MYA-2876) (Yeast), this protein is Sulfate adenylyltransferase.